A 343-amino-acid polypeptide reads, in one-letter code: ATP-dependent 6-phosphofructokinase (343 aa).

Residues Gly-10 and 103–106 (GEGT) each bind ATP. Residue Glu-104 coordinates Mg(2+). Residues 126–128 (TID), Arg-163, 170–172 (MGR), Glu-223, Arg-267, and 273–276 (HVQR) each bind substrate. Catalysis depends on Asp-128, which acts as the Proton acceptor.

The protein belongs to the phosphofructokinase type A (PFKA) family. Mixed-substrate PFK group III subfamily. As to quaternary structure, homodimer or homotetramer. Mg(2+) is required as a cofactor.

The protein resides in the cytoplasm. It catalyses the reaction beta-D-fructose 6-phosphate + ATP = beta-D-fructose 1,6-bisphosphate + ADP + H(+). It participates in carbohydrate degradation; glycolysis; D-glyceraldehyde 3-phosphate and glycerone phosphate from D-glucose: step 3/4. Catalyzes the phosphorylation of D-fructose 6-phosphate to fructose 1,6-bisphosphate by ATP, the first committing step of glycolysis. In Mycobacterium leprae (strain TN), this protein is ATP-dependent 6-phosphofructokinase.